The following is a 963-amino-acid chain: Glycine dehydrogenase (decarboxylating) (963 aa).

K707 is modified (N6-(pyridoxal phosphate)lysine).

The protein belongs to the GcvP family. As to quaternary structure, the glycine cleavage system is composed of four proteins: P, T, L and H. It depends on pyridoxal 5'-phosphate as a cofactor.

The catalysed reaction is N(6)-[(R)-lipoyl]-L-lysyl-[glycine-cleavage complex H protein] + glycine + H(+) = N(6)-[(R)-S(8)-aminomethyldihydrolipoyl]-L-lysyl-[glycine-cleavage complex H protein] + CO2. Functionally, the glycine cleavage system catalyzes the degradation of glycine. The P protein binds the alpha-amino group of glycine through its pyridoxal phosphate cofactor; CO(2) is released and the remaining methylamine moiety is then transferred to the lipoamide cofactor of the H protein. This is Glycine dehydrogenase (decarboxylating) from Dechloromonas aromatica (strain RCB).